Here is a 353-residue protein sequence, read N- to C-terminus: Quinolinate synthase (353 aa).

2 residues coordinate iminosuccinate: H47 and S68. C113 contacts [4Fe-4S] cluster. Residues 139–141 (YAN) and S156 contribute to the iminosuccinate site. [4Fe-4S] cluster is bound at residue C200. Iminosuccinate contacts are provided by residues 226-228 (HPE) and T243. Residue C297 coordinates [4Fe-4S] cluster.

The protein belongs to the quinolinate synthase family. Type 1 subfamily. [4Fe-4S] cluster serves as cofactor.

It is found in the cytoplasm. The catalysed reaction is iminosuccinate + dihydroxyacetone phosphate = quinolinate + phosphate + 2 H2O + H(+). It functions in the pathway cofactor biosynthesis; NAD(+) biosynthesis; quinolinate from iminoaspartate: step 1/1. Functionally, catalyzes the condensation of iminoaspartate with dihydroxyacetone phosphate to form quinolinate. This chain is Quinolinate synthase, found in Vibrio campbellii (strain ATCC BAA-1116).